The following is a 510-amino-acid chain: NAD(P)H-quinone oxidoreductase subunit 2 A, chloroplastic (510 aa).

The next 14 membrane-spanning stretches (helical) occupy residues 31 to 51, 59 to 79, 99 to 119, 124 to 144, 149 to 169, 184 to 204, 229 to 249, 261 to 281, 295 to 315, 323 to 343, 354 to 374, 395 to 415, 418 to 438, and 484 to 504; these read FIFP…IDLT, WFYF…LFRW, IFQF…VEYI, MAIT…MFLC, LITI…LSGY, LLMG…LYGL, ISIA…LAPF, PTPV…ALAT, WHLL…LLAI, MLAY…IVGD, YMLF…LFGL, ALSL…AGFF, LYLF…IGLL, and MTVC…ILAI.

The protein belongs to the complex I subunit 2 family. As to quaternary structure, NDH is composed of at least 16 different subunits, 5 of which are encoded in the nucleus.

Its subcellular location is the plastid. It is found in the chloroplast thylakoid membrane. The enzyme catalyses a plastoquinone + NADH + (n+1) H(+)(in) = a plastoquinol + NAD(+) + n H(+)(out). It catalyses the reaction a plastoquinone + NADPH + (n+1) H(+)(in) = a plastoquinol + NADP(+) + n H(+)(out). NDH shuttles electrons from NAD(P)H:plastoquinone, via FMN and iron-sulfur (Fe-S) centers, to quinones in the photosynthetic chain and possibly in a chloroplast respiratory chain. The immediate electron acceptor for the enzyme in this species is believed to be plastoquinone. Couples the redox reaction to proton translocation, and thus conserves the redox energy in a proton gradient. In Oryza sativa subsp. japonica (Rice), this protein is NAD(P)H-quinone oxidoreductase subunit 2 A, chloroplastic.